A 757-amino-acid chain; its full sequence is Endosialin (757 aa).

Residues 1-17 form the signal peptide; the sequence is MLLRLLLAWAAAGPTLG. The Extracellular portion of the chain corresponds to 18–687; sequence QDPWAAEPRA…EHSQRDDRWL (670 aa). In terms of domain architecture, C-type lectin spans 30–156; it reads GPSSCYALFP…CTLAVDGYLC (127 aa). An O-linked (GalNAc...) threonine glycan is attached at threonine 60. A disulfide bridge links cysteine 131 with cysteine 147. One can recognise a Sushi domain in the interval 162 to 232; it reads GACPALQDEA…WSRAGPLCLG (71 aa). One can recognise an EGF-like; calcium-binding domain in the interval 312–351; sequence DTDECQIAGVCQQMCVNYVGGFECYCSEGHELEADGISCS. Intrachain disulfides connect cysteine 316-cysteine 326, cysteine 322-cysteine 335, and cysteine 337-cysteine 350. O-linked (GalNAc...) threonine glycosylation is found at threonine 401, threonine 428, threonine 448, threonine 456, threonine 459, threonine 472, threonine 519, threonine 541, threonine 543, threonine 544, threonine 545, threonine 587, threonine 593, threonine 594, and threonine 595. O-linked (GalNAc...) serine glycosylation is found at serine 598 and serine 601. Residues threonine 612 and threonine 619 are each glycosylated (O-linked (GalNAc...) threonine). Positions 618 to 627 are enriched in low complexity; the sequence is PTLLPSQSPT. Residues 618-662 form a disordered region; the sequence is PTLLPSQSPTNQTSPISPTHPHSKAPQIPREDGPSPKLALWLPSP. Residues serine 623 and serine 625 are each glycosylated (O-linked (GalNAc...) serine). Residues threonine 627 and threonine 630 are each glycosylated (O-linked (GalNAc...) threonine). O-linked (GalNAc...) serine glycosylation is present at serine 631. O-linked (GalNAc...) threonine glycosylation is present at threonine 636. Serine 640 carries O-linked (GalNAc...) serine glycosylation. Residues 688–708 form a helical membrane-spanning segment; sequence LVALLVPTCVFLVVLLALGIV. Over 709-757 the chain is Cytoplasmic; that stretch reads YCTRCGPHAPNKRITDCYRWVIHAGSKSPTEPMPPRGSLTGVQTCRTSV. Positions 737–757 are disordered; the sequence is PTEPMPPRGSLTGVQTCRTSV. Serine 746 bears the Phosphoserine mark. Positions 748-757 are enriched in polar residues; it reads TGVQTCRTSV.

Interacts with PDGFRA; this interaction promotes PDGF receptor signaling pathway. Interacts with integrin beta-1/ITGB1. Interacts with insulin receptor/INSR; this interaction diminishes INSR autophosphorylation. In terms of processing, O-glycosylated with sialylated oligosaccharides. May be N-glycosylated. Expressed in tumor endothelial cells but absent or barely detectable in normal endothelial cells. Expressed in metastatic lesions of the liver and during angiogenesis of corpus luteum formation and wound healing. Expressed in vascular endothelial cells of malignant tumors but not in normal blood vessels. Expressed in stromal fibroblasts. Strongly expressed in pericytes. Expressed on stromal cells and cells with lymphoid morphology such a T-cells.

The protein resides in the membrane. In terms of biological role, cell surface glycoprotein involved in various biological processes including angiogenesis, immune response modulation, and tissue remodeling and repair. Participates in pericyte proliferation through positive modulation of the PDGF receptor signaling pathway. Acts as a scaffold for factor X, triggering allosteric changes and the spatial re-alignment of factor X with the TF-factor VIIa complex, thereby enhancing coagulation activation. Modulates the insulin signaling pathway by interacting with insulin receptor/INSR and by diminishing its capacity to be autophosphorylated in response to insulin. Also regulates LPS-induced inflammatory response in macrophages by favoring the production of proinflammatory cytokines. In human, negatively regulates T-cell proliferation compared with stromal cells where it increases proliferation. This chain is Endosialin (CD248), found in Homo sapiens (Human).